Consider the following 3072-residue polypeptide: Platelet binding protein GspB (3072 aa).

A signal peptide spans 1 to 85 (MFFKRQKGQY…AVLGGAVVTS (85 aa)). Disordered stretches follow at residues 117-147 (EAAT…SASS), 182-254 (SESL…APNV), 876-909 (SAST…SVSA), 936-969 (SAST…SVSA), 1024-2085 (SASV…SVSA), 2106-2139 (SAST…SVSA), 2173-2223 (VSAS…SVSA), 2250-2595 (SAST…SVSA), 2625-2965 (TSAS…NASV), and 3014-3045 (SQSL…GESE). Over residues 118–127 (AATTLSSTEA) the composition is skewed to polar residues. Residues 123 to 236 (SSTEANPVES…SSQQSTEASS (114 aa)) form a ser-rich region 1 (SSR1) region. 2 stretches are compositionally biased toward low complexity: residues 131–147 (ESLS…SASS) and 182–238 (SESL…SSQT). Residues 237–603 (QTGRRRTRRA…GSKFIDTRAG (367 aa)) form a basic region (BR) region. Residues 604–3028 (SISKSQSTSN…ESQSSSASQS (2425 aa)) form a ser-rich region 2 (SSR2) region. The segment covering 3014-3028 (SQSLSESQSSSASQS) has biased composition (low complexity). The LPXTG sorting signal motif lies at 3038 to 3042 (LPRTG). At T3041 the chain carries Pentaglycyl murein peptidoglycan amidated threonine. Positions 3042–3072 (GESENKASILALGLGALGLAFKKRKKNESED) are cleaved as a propeptide — removed by sortase.

The protein belongs to the serine-rich repeat protein (SRRP) family. Both SSR domains in the unglycosylated protein bind to Asp2 and Asp3; glycosylated protein binds less well. Interacts with the human cell surface glycoprotein GP1BA. Post-translationally, proteolytically cleaved by a metalloprotease. In terms of processing, both SSR1 and SSR2 domains are glycosylated. A truncated derivative (residues 1-2062) contains 105 nmol per nmol of protein, suggesting at least 10% of the apparent molecular weight is due to carbohydrates. Glucose and N-acetylglucosamine are present in a ratio of 30:73 residues per truncated polypeptide, as well as minor amounts of galactose and N-acetylgalactosamine. Glycosylation occurs intracellularly in the Ser-rich regions SSR1 and SSR2. Glycosylation of SSR2 domain may be required to prevent aggregation of GspB. It is probable that most of the Ser residues in SSR1 and SSR2 are O-GlcNAcylated. Sequential glycosylation by sugar transferases are able to generate complex sugar polymorphisms.

Its subcellular location is the secreted. It localises to the cell wall. Functionally, plays a role in virulence and host-pathogen interactions. Mediates binding to human platelets via interaction with the human cell surface glycoprotein GP1BA. Plays a positive role in biofilm formation, possibly by self-association via the basic region (BR). In Streptococcus gordonii, this protein is Platelet binding protein GspB (gspB).